A 448-amino-acid polypeptide reads, in one-letter code: uncharacterized protein (448 aa).

A helical transmembrane segment spans residues 19 to 41 (LGLLVPFLLLLFSCTNTVGYGVL). Residues 105–181 (YSYATSVLDG…CFSHGLSLFD (77 aa)) enclose the SH3b domain.

The protein localises to the membrane. This is an uncharacterized protein from Treponema pallidum (strain Nichols).